The sequence spans 176 residues: NAD(P)H-quinone oxidoreductase subunit 6, chloroplastic (176 aa).

5 consecutive transmembrane segments (helical) span residues 10 to 30 (FLLVFLGSGLLFGSLGVVLFP), 32 to 52 (PIFSAFSLGFVLVCISLLYIL), 61 to 81 (AQLLIYVGAITVLIIFAVMFM), 95 to 115 (VGDGITSVICTTILFSLISTI), and 152 to 172 (FFLPFELISIILLVALIGAIS).

The protein belongs to the complex I subunit 6 family. In terms of assembly, NDH is composed of at least 16 different subunits, 5 of which are encoded in the nucleus.

It is found in the plastid. The protein localises to the chloroplast thylakoid membrane. It carries out the reaction a plastoquinone + NADH + (n+1) H(+)(in) = a plastoquinol + NAD(+) + n H(+)(out). The enzyme catalyses a plastoquinone + NADPH + (n+1) H(+)(in) = a plastoquinol + NADP(+) + n H(+)(out). In terms of biological role, NDH shuttles electrons from NAD(P)H:plastoquinone, via FMN and iron-sulfur (Fe-S) centers, to quinones in the photosynthetic chain and possibly in a chloroplast respiratory chain. The immediate electron acceptor for the enzyme in this species is believed to be plastoquinone. Couples the redox reaction to proton translocation, and thus conserves the redox energy in a proton gradient. This is NAD(P)H-quinone oxidoreductase subunit 6, chloroplastic (ndhG) from Aethionema cordifolium (Lebanon stonecress).